The chain runs to 414 residues: Putative transporter AmpG 4 (414 aa).

A run of 12 helical transmembrane segments spans residues I15 to V35, I44 to W63, W84 to P104, T109 to V129, V150 to I170, L177 to N197, F230 to A250, I268 to V288, F295 to L315, A324 to V344, Y360 to G379, and G389 to N409.

Belongs to the major facilitator superfamily.

Its subcellular location is the cell inner membrane. This is Putative transporter AmpG 4 (ampG4) from Rickettsia felis (strain ATCC VR-1525 / URRWXCal2) (Rickettsia azadi).